A 968-amino-acid polypeptide reads, in one-letter code: RNA polymerase-associated protein RapA (968 aa).

A Helicase ATP-binding domain is found at 164 to 334 (DVGRRHAPRV…FARLRLLDPN (171 aa)). 177-184 (DEVGLGKT) is an ATP binding site. The short motif at 280–283 (DEAH) is the DEAH box element. The region spanning 490-662 (RVEWLMGYLT…YLASPDQTEG (173 aa)) is the Helicase C-terminal domain.

It belongs to the SNF2/RAD54 helicase family. RapA subfamily. Interacts with the RNAP. Has a higher affinity for the core RNAP than for the holoenzyme. Its ATPase activity is stimulated by binding to RNAP.

Transcription regulator that activates transcription by stimulating RNA polymerase (RNAP) recycling in case of stress conditions such as supercoiled DNA or high salt concentrations. Probably acts by releasing the RNAP, when it is trapped or immobilized on tightly supercoiled DNA. Does not activate transcription on linear DNA. Probably not involved in DNA repair. The polypeptide is RNA polymerase-associated protein RapA (Escherichia coli O139:H28 (strain E24377A / ETEC)).